Here is a 224-residue protein sequence, read N- to C-terminus: MKKRAIVLLSGGLDSATVLAMANADGFETYALSMRYGQRHSSELEAAKKVAAALGAVRHEIVDLDLRKFGGSALTDDALDVPTDGVQSGIPITYVPARNTIMLSLALGWAEAVGARDLFFGANAVDYSGYPDCRPEYVAAYETLANLATKAGVEGERIRVNAPIINMTKAEIIQAGVRLGVDYGLTVSCYKADDAGRACGVCDSCRIRKAGFEAAGVPDPTRYV.

9 to 19 contributes to the ATP binding site; it reads LSGGLDSATVL. 4 residues coordinate Zn(2+): Cys-189, Cys-199, Cys-202, and Cys-205.

Belongs to the QueC family. It depends on Zn(2+) as a cofactor.

It catalyses the reaction 7-carboxy-7-deazaguanine + NH4(+) + ATP = 7-cyano-7-deazaguanine + ADP + phosphate + H2O + H(+). It participates in purine metabolism; 7-cyano-7-deazaguanine biosynthesis. In terms of biological role, catalyzes the ATP-dependent conversion of 7-carboxy-7-deazaguanine (CDG) to 7-cyano-7-deazaguanine (preQ(0)). The sequence is that of 7-cyano-7-deazaguanine synthase from Ralstonia pickettii (strain 12J).